Here is a 128-residue protein sequence, read N- to C-terminus: Large ribosomal subunit protein uL22 (128 aa).

It belongs to the universal ribosomal protein uL22 family. In terms of assembly, part of the 50S ribosomal subunit.

Its function is as follows. This protein binds specifically to 23S rRNA; its binding is stimulated by other ribosomal proteins, e.g. L4, L17, and L20. It is important during the early stages of 50S assembly. It makes multiple contacts with different domains of the 23S rRNA in the assembled 50S subunit and ribosome. The globular domain of the protein is located near the polypeptide exit tunnel on the outside of the subunit, while an extended beta-hairpin is found that lines the wall of the exit tunnel in the center of the 70S ribosome. The sequence is that of Large ribosomal subunit protein uL22 from Prochlorococcus marinus subsp. pastoris (strain CCMP1986 / NIES-2087 / MED4).